The primary structure comprises 198 residues: MLYPTPIAKLIDSFSKLPGIGTKTATRLAFYTIGMSDEDVNEFAKNLLAAKRELTYCSVCGNLTDDDPCLICTDKTRDQSVILVVEDSKDVSAMEKIQEYNGLYHVLHGLISPMNGISPDDINLKSLITRLMDGQVTEVIVATNATADGEATSMYISRVLKPAGIKVTRLARGLAVGSDIEYADEVTLLRAIENRTEL.

A C4-type zinc finger spans residues 57-72 (CSVCGNLTDDDPCLIC). A Toprim domain is found at 80 to 175 (SVILVVEDSK…KVTRLARGLA (96 aa)).

Belongs to the RecR family.

Functionally, may play a role in DNA repair. It seems to be involved in an RecBC-independent recombinational process of DNA repair. It may act with RecF and RecO. This is Recombination protein RecR from Streptococcus agalactiae serotype Ia (strain ATCC 27591 / A909 / CDC SS700).